The following is a 359-amino-acid chain: Histidinol-phosphate aminotransferase (359 aa).

Residue Lys217 is modified to N6-(pyridoxal phosphate)lysine.

It belongs to the class-II pyridoxal-phosphate-dependent aminotransferase family. Histidinol-phosphate aminotransferase subfamily. In terms of assembly, homodimer. Requires pyridoxal 5'-phosphate as cofactor.

It carries out the reaction L-histidinol phosphate + 2-oxoglutarate = 3-(imidazol-4-yl)-2-oxopropyl phosphate + L-glutamate. It functions in the pathway amino-acid biosynthesis; L-histidine biosynthesis; L-histidine from 5-phospho-alpha-D-ribose 1-diphosphate: step 7/9. This Salmonella typhi protein is Histidinol-phosphate aminotransferase.